The primary structure comprises 134 residues: Profilin-2 (134 aa).

Position 114 is a phosphothreonine (Thr-114).

Belongs to the profilin family. As to quaternary structure, occurs in many kinds of cells as a complex with monomeric actin in a 1:1 ratio. Phosphorylated by MAP kinases.

Its subcellular location is the cytoplasm. It is found in the cytoskeleton. Functionally, binds to actin and affects the structure of the cytoskeleton. At high concentrations, profilin prevents the polymerization of actin, whereas it enhances it at low concentrations. By binding to PIP2, it inhibits the formation of IP3 and DG. This Nicotiana tabacum (Common tobacco) protein is Profilin-2 (PRO2).